The chain runs to 52 residues: Conotoxin Cal9.2d (52 aa).

The propeptide occupies 1–6; sequence KRGVTL. Cystine bridges form between Cys14–Cys31, Cys19–Cys41, and Cys21–Cys46.

In terms of tissue distribution, expressed by the venom duct.

It localises to the secreted. Functionally, probable neurotoxin with unknown target. Possibly targets ion channels. This is Conotoxin Cal9.2d from Californiconus californicus (California cone).